The following is a 267-amino-acid chain: Phosphatidylglycerol--prolipoprotein diacylglyceryl transferase (267 aa).

4 consecutive transmembrane segments (helical) span residues 20–40, 57–77, 88–108, and 117–137; these read LEIR…VYLA, FILI…VAFS, IFAI…GAIV, and FINT…AQAI. Position 139 (Arg139) interacts with a 1,2-diacyl-sn-glycero-3-phospho-(1'-sn-glycerol). 3 consecutive transmembrane segments (helical) span residues 175–195, 205–225, and 235–255; these read QPTF…VCVL, GEIT…IEGL, and IRVS…MVVL.

The protein belongs to the Lgt family.

The protein localises to the cell membrane. It carries out the reaction L-cysteinyl-[prolipoprotein] + a 1,2-diacyl-sn-glycero-3-phospho-(1'-sn-glycerol) = an S-1,2-diacyl-sn-glyceryl-L-cysteinyl-[prolipoprotein] + sn-glycerol 1-phosphate + H(+). The protein operates within protein modification; lipoprotein biosynthesis (diacylglyceryl transfer). Catalyzes the transfer of the diacylglyceryl group from phosphatidylglycerol to the sulfhydryl group of the N-terminal cysteine of a prolipoprotein, the first step in the formation of mature lipoproteins. The chain is Phosphatidylglycerol--prolipoprotein diacylglyceryl transferase from Streptococcus suis (strain 98HAH33).